The chain runs to 133 residues: Protein U17 (133 aa).

Residues 82 to 102 form a helical membrane-spanning segment; it reads FVSVLWCVILVFVVKIKLFFL.

It localises to the membrane. In Homo sapiens (Human), this protein is Protein U17 (U17/U16).